The following is a 408-amino-acid chain: Peptidoglycan muramidase Tse3 (408 aa).

Ca(2+)-binding residues include Asn181, Asp253, Gln254, Glu258, Glu375, Ser378, Arg379, Asp382, and Asn384.

As to quaternary structure, forms a heterotetramer with Tsi3 consisting of two Tse3 dimers and two Tsi3 dimers. Formation of the complex inactivates Tse3 enzymatic activity. It depends on Ca(2+) as a cofactor.

Its subcellular location is the host membrane. The protein localises to the secreted. It catalyses the reaction Hydrolysis of (1-&gt;4)-beta-linkages between N-acetylmuramic acid and N-acetyl-D-glucosamine residues in a peptidoglycan and between N-acetyl-D-glucosamine residues in chitodextrins.. With respect to regulation, enzymatic activity depends on membrane binding. In terms of biological role, toxin secreted by the H1 type VI (H1-T6SS) secretion system into the periplasm of recipient cells. Degrades peptidoglycan via muramidase activity thereby helping itself to compete with other bacteria. To protect itself, the bacterium synthesizes immunity protein Tsi3 that specifically interacts with and inactivates cognate toxin. The polypeptide is Peptidoglycan muramidase Tse3 (Pseudomonas aeruginosa (strain ATCC 15692 / DSM 22644 / CIP 104116 / JCM 14847 / LMG 12228 / 1C / PRS 101 / PAO1)).